The following is a 243-amino-acid chain: UPF0758 protein Cyan7425_1778 (243 aa).

Positions 112–235 constitute an MPN domain; it reads TIINDPAVAA…FRSLRQTTKL (124 aa). 3 residues coordinate Zn(2+): His184, His186, and Asp197. Residues 184–197 carry the JAMM motif motif; sequence HNHPSGNVEPSPED.

It belongs to the UPF0758 family.

The sequence is that of UPF0758 protein Cyan7425_1778 from Cyanothece sp. (strain PCC 7425 / ATCC 29141).